A 236-amino-acid polypeptide reads, in one-letter code: CD81 antigen (236 aa).

Residues 1–12 (MGVEGCTKCIKY) lie on the Cytoplasmic side of the membrane. Residues 13-33 (LLFVFNFVFWLAGGVILGVAL) form a helical membrane-spanning segment. At 34–63 (WLRHDPQTTNLLYLELGDKPAPNTFYVGIY) the chain is on the extracellular side. The chain crosses the membrane as a helical span at residues 64 to 84 (ILIAVGAVMMFVGFLGCYGAI). The Cytoplasmic segment spans residues 85-89 (QESQC). Residues 90 to 112 (LLGTFFTCLVILFACEVAAGIWG) form a helical membrane-spanning segment. Residues 113 to 201 (FVNKDQIAKD…QKIDELFSGK (89 aa)) are Extracellular-facing. Disulfide bonds link Cys-156/Cys-190 and Cys-157/Cys-175. The helical transmembrane segment at 202-224 (LYLIGIAAIVVAVIMIFEMILSM) threads the bilayer. Position 219 (Glu-219) interacts with cholesterol. Topologically, residues 225–236 (VLCCGIRNSSVY) are cytoplasmic.

The protein belongs to the tetraspanin (TM4SF) family. Homodimer. Part of a complex composed of CD19, CR2/CD21, CD81 and IFITM1/CD225 in the membrane of mature B cells. Interacts (via the second extracellular domain) with CD19; this interaction is initiated early during biosynthesis in the ER and enables trafficking of only properly folded CD19. Part of a complex that includes MHC class II/HLA-DR molecules and IFITM1. Interacts with IFITM1. Interacts with IFITM2 and IFITM3. Part of integrin-tetraspanin complex composed of CD9, CD81, beta-1 and beta-2 integrins in the membrane of monocyte/macrophages. Interacts (via the second extracellular domain) with integrin ITGAV:ITGB3. Interacts with CD247/CD3 zeta, ICAM1 and CD9 at the immune synapse on T cell membrane. Part of a GPCR-tetraspanin complex consisting at least of ADGRG1, CD81, possibly CD9, and GNA11 in which CD81 enhances the association of ADGRG1 with GNA11. Part of a complex composed of CD9, CD81, PTGFRN and IGSF8. Interacts directly with IGSF8. Interacts with CD53 and SCIMP. Interacts with SAMHD1 (via its C-terminus). Interacts with glypican GPC3 and with the transcriptional repressor HHEX; binding to GPC3 decreases the availability of free CD81 for binding to HHEX, resulting in nuclear translocation of HHEX and transcriptional repression. Interacts with CLDN1. Interacts with CLDN6 and CLDN9. In terms of processing, not glycosylated. Post-translationally, likely constitutively palmitoylated at low levels. Protein palmitoylation is up-regulated upon coligation of BCR and CD9-C2R-CD81 complexes in lipid rafts.

It is found in the cell membrane. It localises to the basolateral cell membrane. In terms of biological role, structural component of specialized membrane microdomains known as tetraspanin-enriched microdomains (TERMs), which act as platforms for receptor clustering and signaling. Essential for trafficking and compartmentalization of CD19 receptor on the surface of activated B cells. Upon initial encounter with microbial pathogens, enables the assembly of CD19-CR2/CD21 and B cell receptor (BCR) complexes at signaling TERMs, lowering the threshold dose of antigen required to trigger B cell clonal expansion and antibody production. In T cells, facilitates the localization of CD247/CD3 zeta at antigen-induced synapses with B cells, providing for costimulation and polarization toward T helper type 2 phenotype. Present in MHC class II compartments, may also play a role in antigen presentation. Can act both as positive and negative regulator of homotypic or heterotypic cell-cell fusion processes. Positively regulates sperm-egg fusion and may be involved in acrosome reaction. In myoblasts, associates with CD9 and PTGFRN and inhibits myotube fusion during muscle regeneration. In macrophages, associates with CD9 and beta-1 and beta-2 integrins, and prevents macrophage fusion into multinucleated giant cells specialized in ingesting complement-opsonized large particles. Also prevents the fusion of mononuclear cell progenitors into osteoclasts in charge of bone resorption. May regulate the compartmentalization of enzymatic activities. In T cells, defines the subcellular localization of dNTPase SAMHD1 and permits its degradation by the proteasome, thereby controlling intracellular dNTP levels. Also involved in cell adhesion and motility. Positively regulates integrin-mediated adhesion of macrophages, particularly relevant for the inflammatory response in the lung. The protein is CD81 antigen (CD81) of Chlorocebus aethiops (Green monkey).